A 502-amino-acid chain; its full sequence is mRNA cap guanine-N(7) methyltransferase (502 aa).

Residues 1-118 (MADENPQAQG…SQQEEAMRFS (118 aa)) form a disordered region. Positions 93-115 (LVDRETLRRRQEERERSQQEEAM) are enriched in basic and acidic residues. An mRNA cap 0 methyltransferase domain is found at 146-502 (SKIKGLRSFN…FYHAFCFYKV (357 aa)). 155–156 (NN) lines the mRNA pocket. S-adenosyl-L-methionine-binding positions include lysine 159, glycine 202, aspartate 226, aspartate 264, 307-309 (MFT), and tyrosine 312. Residues 360-369 (ERETAAKKEE) are compositionally biased toward basic and acidic residues. Positions 360 to 381 (ERETAAKKEEAEPEDGEVEEDD) are disordered. A compositionally biased stretch (acidic residues) spans 370-381 (AEPEDGEVEEDD).

The protein belongs to the class I-like SAM-binding methyltransferase superfamily. mRNA cap 0 methyltransferase family.

The protein resides in the nucleus. The enzyme catalyses a 5'-end (5'-triphosphoguanosine)-ribonucleoside in mRNA + S-adenosyl-L-methionine = a 5'-end (N(7)-methyl 5'-triphosphoguanosine)-ribonucleoside in mRNA + S-adenosyl-L-homocysteine. Its function is as follows. Responsible for methylating the 5'-cap structure of mRNAs. The protein is mRNA cap guanine-N(7) methyltransferase (abd1) of Aspergillus oryzae (strain ATCC 42149 / RIB 40) (Yellow koji mold).